Consider the following 235-residue polypeptide: 2,3,4,5-tetrahydropyridine-2,6-dicarboxylate N-acetyltransferase (235 aa).

This sequence belongs to the transferase hexapeptide repeat family. DapH subfamily.

The enzyme catalyses (S)-2,3,4,5-tetrahydrodipicolinate + acetyl-CoA + H2O = L-2-acetamido-6-oxoheptanedioate + CoA. It functions in the pathway amino-acid biosynthesis; L-lysine biosynthesis via DAP pathway; LL-2,6-diaminopimelate from (S)-tetrahydrodipicolinate (acetylase route): step 1/3. Catalyzes the transfer of an acetyl group from acetyl-CoA to tetrahydrodipicolinate. The protein is 2,3,4,5-tetrahydropyridine-2,6-dicarboxylate N-acetyltransferase of Anoxybacillus flavithermus (strain DSM 21510 / WK1).